The following is a 328-amino-acid chain: tRNA uridine(34) hydroxylase (328 aa).

In terms of domain architecture, Rhodanese spans 122–218; it reads QENRCLVLDV…YGLKMGTGKW (97 aa). The Cysteine persulfide intermediate role is filled by Cys-178.

Belongs to the TrhO family.

It catalyses the reaction uridine(34) in tRNA + AH2 + O2 = 5-hydroxyuridine(34) in tRNA + A + H2O. Its function is as follows. Catalyzes oxygen-dependent 5-hydroxyuridine (ho5U) modification at position 34 in tRNAs. This Chlamydia muridarum (strain MoPn / Nigg) protein is tRNA uridine(34) hydroxylase.